We begin with the raw amino-acid sequence, 329 residues long: MECGGALQLPPGFRFHPTDDELVMYYLCRKCGGLPLAAPVIAEVDLYKFNPWDLPERAMGGEKEWYFFSPRDRKYPNGQRPNRAAGTGYWKATGADKPVGSPRAVAIKKALVFYAGKPPKGVKTNWIMHEYRLADVDRSAAARKLSKSSHNALRLDDWVLCRIYNKKGVIERYDTVDAGEDVKPAAAAAAAKGGRIGGGGGAAAMKVELSDYGFYDQEPESEMLCFDRSGSADRDSMPRLHTDSSGSEHVLSPSPSPDDFPGGGDHDYAESQPSGGCGGWPGVDWAAVGDDGFVIDSSLFELPSPAAFSRAAGDGAAFGDMFTYLQKPF.

Positions 9 to 166 (LPPGFRFHPT…DWVLCRIYNK (158 aa)) constitute an NAC domain. The disordered stretch occupies residues 228–281 (RSGSADRDSMPRLHTDSSGSEHVLSPSPSPDDFPGGGDHDYAESQPSGGCGGWP). Residues 230-242 (GSADRDSMPRLHT) are compositionally biased toward basic and acidic residues.

Interacts with NAC048 and NAC002. Expressed in roots and embryo. Weakly expressed in callus.

It localises to the nucleus. Functionally, transcription activator that binds to the promoter of the stress response gene LEA19. Involved in tolerance to abiotic stresses. This chain is NAC domain-containing protein 71, found in Oryza sativa subsp. japonica (Rice).